A 182-amino-acid chain; its full sequence is Putative minor fimbrial subunit PmfF (182 aa).

A signal peptide spans 1 to 22 (MKNSIIKSAITCLLLLSPSTFA).

The protein belongs to the fimbrial protein family.

It localises to the fimbrium. This Proteus mirabilis (strain HI4320) protein is Putative minor fimbrial subunit PmfF (pmfF).